Reading from the N-terminus, the 820-residue chain is Serine/threonine-protein phosphatase 4 regulatory subunit 3-A (820 aa).

In terms of domain architecture, WH1 spans 1–100 (MSDTRRRVKV…DEIWEKICQV (100 aa)). Positions 682-694 (ELWFNEDDEEEGE) are enriched in acidic residues. 2 disordered regions span residues 682–712 (ELWF…FPEG) and 750–820 (AANG…RLGS). The segment covering 701-712 (EKTKPEDDFPEG) has biased composition (basic and acidic residues). Composition is skewed to polar residues over residues 750 to 761 (AANGANSTNSKS) and 768 to 790 (PATS…STKG). Residues 798–809 (YPDDEDEEEEED) are compositionally biased toward acidic residues.

The protein belongs to the SMEK family. Serine/threonine-protein phosphatase 4 (PP4) occurs in different assemblies of the catalytic and one or more regulatory subunits.

Regulatory subunit of serine/threonine-protein phosphatase 4 (PP4). The chain is Serine/threonine-protein phosphatase 4 regulatory subunit 3-A from Xenopus laevis (African clawed frog).